The primary structure comprises 66 residues: Large ribosomal subunit protein uL29 (66 aa).

Belongs to the universal ribosomal protein uL29 family.

The protein is Large ribosomal subunit protein uL29 of Hydrogenobaculum sp. (strain Y04AAS1).